Reading from the N-terminus, the 1031-residue chain is Sodium/potassium-transporting ATPase subunit alpha (1031 aa).

The tract at residues 1 to 33 is disordered; sequence MADPGDLESRGKADSYSVAEKKSAPKKISKKNA. Over residues 7-23 the composition is skewed to basic and acidic residues; sequence LESRGKADSYSVAEKKS. The span at 24-33 shows a compositional bias: basic residues; sequence APKKISKKNA. A run of 4 helical transmembrane segments spans residues 102–123, 136–155, 297–319, and 326–354; these read MFGGFSMLLWIGAILCFFAFGI, LYLGIVLSVVVIITGCFSYY, FIHIVTGVAVFLGVSFLIISLAM, and AIIFLIGIIVANVPEGLLATVTVCLTLTA. The active-site 4-aspartylphosphate intermediate is the Asp382. An ATP-binding site is contributed by Lys512. Mg(2+) is bound by residues Asp725 and Asp729. The next 4 membrane-spanning stretches (helical) occupy residues 795 to 818, 857 to 882, 924 to 944, and 961 to 986; these read ISPFLMFILFGIPLPLGTITILCI, LISLAYGQIGMMQATAGFFTYFIILA, LTCQTAFFTTIVVVQWADLII, and FLNFGLFFETALAAFLQYTPGVNTGL.

It belongs to the cation transport ATPase (P-type) (TC 3.A.3) family. Type IIC subfamily. The sodium/potassium-transporting ATPase is composed of a catalytic alpha subunit, an auxiliary non-catalytic beta subunit and an additional regulatory subunit.

It localises to the cell membrane. The catalysed reaction is K(+)(out) + Na(+)(in) + ATP + H2O = K(+)(in) + Na(+)(out) + ADP + phosphate + H(+). This alpha subunit is resistant to ouabain. Functionally, this is the catalytic component of the active enzyme, which catalyzes the hydrolysis of ATP coupled with the exchange of sodium and potassium ions across the plasma membrane. This action creates the electrochemical gradient of sodium and potassium ions, providing the energy for active transport of various nutrients. The polypeptide is Sodium/potassium-transporting ATPase subunit alpha (Hydra vulgaris (Hydra)).